Here is a 199-residue protein sequence, read N- to C-terminus: Protein-methionine-sulfoxide reductase heme-binding subunit MsrQ (199 aa).

4 helical membrane-spanning segments follow: residues 10–30, 82–102, 116–136, and 153–173; these read WLKV…FWAI, LWCF…ELGI, PYLT…LTST, and VVYL…KILS.

The protein belongs to the MsrQ family. In terms of assembly, heterodimer of a catalytic subunit (MsrP) and a heme-binding subunit (MsrQ). Requires FMN as cofactor. Heme b serves as cofactor.

It localises to the cell inner membrane. Part of the MsrPQ system that repairs oxidized periplasmic proteins containing methionine sulfoxide residues (Met-O), using respiratory chain electrons. Thus protects these proteins from oxidative-stress damage caused by reactive species of oxygen and chlorine generated by the host defense mechanisms. MsrPQ is essential for the maintenance of envelope integrity under bleach stress, rescuing a wide series of structurally unrelated periplasmic proteins from methionine oxidation, including the primary periplasmic chaperone SurA and the lipoprotein Pal. MsrQ provides electrons for reduction to the reductase catalytic subunit MsrP, using the quinone pool of the respiratory chain. The protein is Protein-methionine-sulfoxide reductase heme-binding subunit MsrQ of Salmonella dublin (strain CT_02021853).